The following is a 245-amino-acid chain: UDP-N-acetyl-D-mannosaminuronic acid transferase (245 aa).

Belongs to the glycosyltransferase 26 family.

The enzyme catalyses UDP-N-acetyl-alpha-D-mannosaminouronate + N-acetyl-alpha-D-glucosaminyl-di-trans,octa-cis-undecaprenyl diphosphate = beta-D-ManNAcA-(1-&gt;4)-alpha-D-GlcNAc-di-trans,octa-cis-undecaprenyl diphosphate + UDP + H(+). Its pathway is bacterial outer membrane biogenesis; enterobacterial common antigen biosynthesis. Functionally, catalyzes the synthesis of Und-PP-GlcNAc-ManNAcA (Lipid II), the second lipid-linked intermediate involved in enterobacterial common antigen (ECA) synthesis. The protein is UDP-N-acetyl-D-mannosaminuronic acid transferase of Photorhabdus laumondii subsp. laumondii (strain DSM 15139 / CIP 105565 / TT01) (Photorhabdus luminescens subsp. laumondii).